The primary structure comprises 222 residues: UPF0758 protein YE0063 (222 aa).

An MPN domain is found at 100 to 222 (VLQNPEITQK…CVSFAERGWL (123 aa)). Residues H171, H173, and D184 each coordinate Zn(2+). Residues 171–184 (HNHPSGKAEPSQAD) carry the JAMM motif motif.

This sequence belongs to the UPF0758 family. YicR subfamily.

This Yersinia enterocolitica serotype O:8 / biotype 1B (strain NCTC 13174 / 8081) protein is UPF0758 protein YE0063.